The following is a 341-amino-acid chain: L-threonine 3-dehydrogenase (341 aa).

Cysteine 38 contributes to the Zn(2+) binding site. Catalysis depends on charge relay system residues threonine 40 and histidine 43. The Zn(2+) site is built by histidine 63, glutamate 64, cysteine 93, cysteine 96, cysteine 99, and cysteine 107. Residues isoleucine 175, aspartate 195, arginine 200, 262-264 (LGI), and 286-287 (IY) each bind NAD(+).

It belongs to the zinc-containing alcohol dehydrogenase family. As to quaternary structure, homotetramer. Zn(2+) is required as a cofactor.

It is found in the cytoplasm. It carries out the reaction L-threonine + NAD(+) = (2S)-2-amino-3-oxobutanoate + NADH + H(+). It functions in the pathway amino-acid degradation; L-threonine degradation via oxydo-reductase pathway; glycine from L-threonine: step 1/2. Its function is as follows. Catalyzes the NAD(+)-dependent oxidation of L-threonine to 2-amino-3-ketobutyrate. This Shigella dysenteriae serotype 1 (strain Sd197) protein is L-threonine 3-dehydrogenase.